A 630-amino-acid chain; its full sequence is Phosphomethylpyrimidine synthase (630 aa).

Residues Asn227, Met256, Tyr285, His321, 341–343 (SRG), 382–385 (DGLR), and Glu421 contribute to the substrate site. His425 is a Zn(2+) binding site. Tyr448 contacts substrate. His489 provides a ligand contact to Zn(2+). Residues Cys569, Cys572, and Cys577 each coordinate [4Fe-4S] cluster.

This sequence belongs to the ThiC family. In terms of assembly, homodimer. [4Fe-4S] cluster serves as cofactor.

It catalyses the reaction 5-amino-1-(5-phospho-beta-D-ribosyl)imidazole + S-adenosyl-L-methionine = 4-amino-2-methyl-5-(phosphooxymethyl)pyrimidine + CO + 5'-deoxyadenosine + formate + L-methionine + 3 H(+). It functions in the pathway cofactor biosynthesis; thiamine diphosphate biosynthesis. In terms of biological role, catalyzes the synthesis of the hydroxymethylpyrimidine phosphate (HMP-P) moiety of thiamine from aminoimidazole ribotide (AIR) in a radical S-adenosyl-L-methionine (SAM)-dependent reaction. The polypeptide is Phosphomethylpyrimidine synthase (Hydrogenovibrio crunogenus (strain DSM 25203 / XCL-2) (Thiomicrospira crunogena)).